The following is a 256-amino-acid chain: Acetyl-coenzyme A carboxylase carboxyl transferase subunit alpha (256 aa).

Positions 1–236 (MTDVSRVLKE…KANLIEQITS (236 aa)) constitute a CoA carboxyltransferase C-terminal domain.

The protein belongs to the AccA family. Acetyl-CoA carboxylase is a heterohexamer composed of biotin carboxyl carrier protein (AccB), biotin carboxylase (AccC) and two subunits each of ACCase subunit alpha (AccA) and ACCase subunit beta (AccD).

Its subcellular location is the cytoplasm. It carries out the reaction N(6)-carboxybiotinyl-L-lysyl-[protein] + acetyl-CoA = N(6)-biotinyl-L-lysyl-[protein] + malonyl-CoA. The protein operates within lipid metabolism; malonyl-CoA biosynthesis; malonyl-CoA from acetyl-CoA: step 1/1. Component of the acetyl coenzyme A carboxylase (ACC) complex. First, biotin carboxylase catalyzes the carboxylation of biotin on its carrier protein (BCCP) and then the CO(2) group is transferred by the carboxyltransferase to acetyl-CoA to form malonyl-CoA. The chain is Acetyl-coenzyme A carboxylase carboxyl transferase subunit alpha from Streptococcus pyogenes serotype M2 (strain MGAS10270).